Here is a 256-residue protein sequence, read N- to C-terminus: MTEIKISKTEKKLRHYITKAIADYKLIEKGDKVMLCLSGGKDSFGLLKVLHGLIEDKTYDIDLHVYTLDQSQPGWDDSQLRKYLDNLGVSYEIETKNTYGVVIDKVPEGKTYCSLCSRLRRGNIYRYAKEHKMDKIILGHHRDDLIESLLMSILYQGQIKSMPPKFITQDGENTVIRPMVLVQERDLIEFAKEENFPIIPCNLCGSQENLKRKKVKKLIQDLAHENPKVPSNILNSLSNVLPSHLMDRDLLNIIQN.

Positions 38–43 (SGGKDS) match the PP-loop motif motif. [4Fe-4S] cluster contacts are provided by C113, C116, and C204.

The protein belongs to the TtcA family. In terms of assembly, homodimer. Requires Mg(2+) as cofactor. [4Fe-4S] cluster is required as a cofactor.

The protein resides in the cytoplasm. It catalyses the reaction cytidine(32) in tRNA + S-sulfanyl-L-cysteinyl-[cysteine desulfurase] + AH2 + ATP = 2-thiocytidine(32) in tRNA + L-cysteinyl-[cysteine desulfurase] + A + AMP + diphosphate + H(+). The protein operates within tRNA modification. Functionally, catalyzes the ATP-dependent 2-thiolation of cytidine in position 32 of tRNA, to form 2-thiocytidine (s(2)C32). The sulfur atoms are provided by the cysteine/cysteine desulfurase (IscS) system. The chain is tRNA-cytidine(32) 2-sulfurtransferase 1 from Francisella philomiragia subsp. philomiragia (strain ATCC 25017 / CCUG 19701 / FSC 153 / O#319-036).